The following is a 237-amino-acid chain: Uridylate kinase (237 aa).

12-15 (KLSG) contributes to the ATP binding site. Positions 20-25 (GENGFG) are involved in allosteric activation by GTP. Position 54 (G54) interacts with UMP. The ATP site is built by G55 and R59. UMP is bound by residues D72 and 133-140 (TGNPYFST). Residues Y166 and D169 each contribute to the ATP site.

It belongs to the UMP kinase family. As to quaternary structure, homohexamer.

The protein localises to the cytoplasm. The enzyme catalyses UMP + ATP = UDP + ADP. The protein operates within pyrimidine metabolism; CTP biosynthesis via de novo pathway; UDP from UMP (UMPK route): step 1/1. Allosterically activated by GTP. Inhibited by UTP. In terms of biological role, catalyzes the reversible phosphorylation of UMP to UDP. The polypeptide is Uridylate kinase (Clostridium perfringens (strain ATCC 13124 / DSM 756 / JCM 1290 / NCIMB 6125 / NCTC 8237 / Type A)).